A 371-amino-acid chain; its full sequence is tRNA-specific 2-thiouridylase MnmA (371 aa).

ATP is bound by residues 13–20 and M39; that span reads GMSGGVDS. Positions 99 to 101 are interaction with target base in tRNA; that stretch reads NPD. C104 acts as the Nucleophile in catalysis. The cysteines at positions 104 and 200 are disulfide-linked. An ATP-binding site is contributed by G128. The interaction with tRNA stretch occupies residues 150–152; sequence KDQ. C200 acts as the Cysteine persulfide intermediate in catalysis. The interval 309 to 310 is interaction with tRNA; it reads RY.

It belongs to the MnmA/TRMU family.

The protein resides in the cytoplasm. The catalysed reaction is S-sulfanyl-L-cysteinyl-[protein] + uridine(34) in tRNA + AH2 + ATP = 2-thiouridine(34) in tRNA + L-cysteinyl-[protein] + A + AMP + diphosphate + H(+). Its function is as follows. Catalyzes the 2-thiolation of uridine at the wobble position (U34) of tRNA, leading to the formation of s(2)U34. This chain is tRNA-specific 2-thiouridylase MnmA, found in Bacillus velezensis (strain DSM 23117 / BGSC 10A6 / LMG 26770 / FZB42) (Bacillus amyloliquefaciens subsp. plantarum).